A 437-amino-acid chain; its full sequence is Coiled-coil domain-containing protein 78 (437 aa).

Coiled-coil stretches lie at residues 83–114 (HLRE…LHGN), 147–287 (EELK…QRQE), and 360–408 (QRLQ…YKQE).

It belongs to the CCDC78 family.

It localises to the cytoplasm. The protein resides in the cytoskeleton. It is found in the microtubule organizing center. Its subcellular location is the centrosome. The protein localises to the centriole. It localises to the perinuclear region. The protein resides in the cell membrane. It is found in the sarcolemma. Its subcellular location is the sarcoplasmic reticulum. Component of the deuterosome, a structure that promotes de novo centriole amplification in multiciliated cells that can generate more than 100 centrioles. Deuterosome-mediated centriole amplification occurs in terminally differentiated multiciliated cells (G1/0) and not in S phase. Essential for centriole amplification and is required for CEP152 localization to the deuterosome. This Mus musculus (Mouse) protein is Coiled-coil domain-containing protein 78 (Ccdc78).